The sequence spans 256 residues: Protein N-terminal and lysine N-methyltransferase EFM7 (256 aa).

Residues 1-26 are disordered; it reads MSDTESLNDALGLFDEPEDFRPEKPK. Residues Trp-64, 90-92, Asp-112, Trp-145, and Ser-168 each bind S-adenosyl-L-methionine; that span reads GAA.

It belongs to the class I-like SAM-binding methyltransferase superfamily. EFM7 family.

It is found in the cytoplasm. Functionally, S-adenosyl-L-methionine-dependent protein methyltransferase that trimethylates the N-terminal glycine 'Gly-2' of elongation factor 1-alpha, before also catalyzing the mono- and dimethylation of 'Lys-3'. This chain is Protein N-terminal and lysine N-methyltransferase EFM7, found in Candida glabrata (strain ATCC 2001 / BCRC 20586 / JCM 3761 / NBRC 0622 / NRRL Y-65 / CBS 138) (Yeast).